Reading from the N-terminus, the 503-residue chain is Ent-kaurene oxidase-like 5 (503 aa).

Residues 8–28 (GAGGIGVAAAAAVVAATLAVV) form a helical membrane-spanning segment. Heme is bound at residue Cys448.

The protein belongs to the cytochrome P450 family. Heme serves as cofactor. In terms of tissue distribution, expressed in roots.

It is found in the membrane. Its function is as follows. May hydroxylate diterpenes. The chain is Ent-kaurene oxidase-like 5 from Oryza sativa subsp. japonica (Rice).